The chain runs to 263 residues: Energy-coupling factor transporter transmembrane protein EcfT (263 aa).

A run of 4 helical transmembrane segments spans residues 22–42 (IIFA…ATNI), 69–89 (ILFL…EGAV), 105–125 (LAII…LVTL), and 243–263 (TGLI…RGGF).

It belongs to the energy-coupling factor EcfT family. As to quaternary structure, forms a stable energy-coupling factor (ECF) transporter complex composed of 2 membrane-embedded substrate-binding proteins (S component), 2 ATP-binding proteins (A component) and 2 transmembrane proteins (T component). May be able to interact with more than 1 S component at a time.

The protein localises to the cell membrane. Functionally, transmembrane (T) component of an energy-coupling factor (ECF) ABC-transporter complex. Unlike classic ABC transporters this ECF transporter provides the energy necessary to transport a number of different substrates. The chain is Energy-coupling factor transporter transmembrane protein EcfT from Exiguobacterium sibiricum (strain DSM 17290 / CCUG 55495 / CIP 109462 / JCM 13490 / 255-15).